The primary structure comprises 316 residues: MLP-like protein 34 (316 aa).

The protein belongs to the MLP family.

This is MLP-like protein 34 (MLP34) from Arabidopsis thaliana (Mouse-ear cress).